A 328-amino-acid polypeptide reads, in one-letter code: Nickel import system permease protein NikB (328 aa).

The next 6 helical transmembrane spans lie at 11–31 (LMQM…LMKL), 104–124 (LLIS…LGII), 139–159 (VIST…LLFI), 170–190 (ILSQ…AYII), 229–249 (ILPI…GTVV), and 279–299 (VLFI…LTLL). An ABC transmembrane type-1 domain is found at 100–297 (APITLLISFS…IINTIADLLT (198 aa)).

Belongs to the binding-protein-dependent transport system permease family. OppBC subfamily. In terms of assembly, the complex is composed of two ATP-binding proteins (NikD and NikE), two transmembrane proteins (NikB and NikC) and a solute-binding protein (NikA).

The protein resides in the cell membrane. Functionally, part of the ABC transporter complex NikABCDE (Opp2) involved in nickel import. Probably responsible for the translocation of the substrate across the membrane. This is Nickel import system permease protein NikB from Staphylococcus aureus (strain Mu50 / ATCC 700699).